The primary structure comprises 125 residues: Small ribosomal subunit protein uS12c (125 aa).

This sequence belongs to the universal ribosomal protein uS12 family. In terms of assembly, part of the 30S ribosomal subunit.

It is found in the plastid. The protein resides in the chloroplast. With S4 and S5 plays an important role in translational accuracy. Located at the interface of the 30S and 50S subunits. This is Small ribosomal subunit protein uS12c (rps12) from Oltmannsiellopsis viridis (Marine flagellate).